Here is a 211-residue protein sequence, read N- to C-terminus: WUSCHEL-related homeobox 14 (211 aa).

The segment at residues 91-155 (STRHRWTPTS…NRRARSKRKQ (65 aa)) is a DNA-binding region (homeobox; WUS-type). Residues 147 to 183 (RRARSKRKQPQTTTANGQADDVAVTTEERRSCGDSGG) are disordered.

It belongs to the WUS homeobox family. In terms of tissue distribution, expressed in root vasculature, pericycle and stamen. Expressed in the procambium during stem maturation.

It is found in the nucleus. In terms of biological role, acts redundantly with WOX4 downstream of the TDR/PXY receptor kinase to regulate procambial cell proliferation and differentiation in vascular tissue, independently of any role in vascular. Involved in the regulation of gibberellin (GA) biosynthesis pathway. Positively regulates the expression of the GA biosynthesis gene GA3OX1, and negatively regulates the expression of GA2OX1 during secondary growth, which increases bioactive GA content in the inflorescence stem. Promotes vascular cell differentiation in the inflorescence stem. Transcription factor which may be involved in developmental processes. This chain is WUSCHEL-related homeobox 14 (WOX14), found in Arabidopsis thaliana (Mouse-ear cress).